The sequence spans 231 residues: Eukaryotic translation initiation factor 4E-1 (231 aa).

A disordered region spans residues 1-55; the sequence is MVVEDTQKSSITDDQITANPNNENEDLEEGEILDDDDSSATSRPPSSSGALARNP. The span at 8 to 18 shows a compositional bias: polar residues; the sequence is KSSITDDQITA. The span at 23–38 shows a compositional bias: acidic residues; sequence ENEDLEEGEILDDDDS. Over residues 39 to 48 the composition is skewed to low complexity; that stretch reads SATSRPPSSS. EIF4G-binding stretches follow at residues 56-59 and 66-102; these read HPLE and FDNP…NNIH. MRNA contacts are provided by residues 74 to 79, K106, and 124 to 125; these read KQAAWG and WE. C129 and C167 are oxidised to a cystine. The segment at 150–159 is EIF4G-binding; that stretch reads YTLLGMIGEQ. MRNA contacts are provided by residues 174–179 and 219–223; these read RNRQEK and KKHDR.

This sequence belongs to the eukaryotic initiation factor 4E family. In terms of assembly, EIF4F is a multi-subunit complex, the composition of which varies with external and internal environmental conditions. It is composed of at least EIF4A, EIF4E and EIF4G. EIF4E is also known to interact with other partners. In higher plants two isoforms of EIF4F have been identified, named isoform EIF4F and isoform EIF(iso)4F. Isoform EIF4F has subunits p220 and p26, whereas isoform EIF(iso)4F has subunits p82 and p28. As to quaternary structure, (Microbial infection) Interacts with potyvirus peanut stripe virus (PStV) helper component proteinase (HC-Pro) in the cytoplasm and with PStV viral genome-linked protein (VPg) in the nucleus; these interactions are possible in susceptible hosts but impaired in resistant plants. Post-translationally, according to the redox status, the Cys-129-Cys-167 disulfide bridge may have a role in regulating protein function by affecting its ability to bind capped mRNA. Expressed ubiquitously with highest levels in young leaves and roots, and lowest levels in flowers.

Its subcellular location is the nucleus. The protein localises to the cytoplasm. Component of the protein complex eIF4F, which is involved in the recognition of the mRNA cap, ATP-dependent unwinding of 5'-terminal secondary structure and recruitment of mRNA to the ribosome. Recognizes and binds the 7-methylguanosine-containing mRNA cap during an early step in the initiation of protein synthesis and facilitates ribosome binding by inducing the unwinding of the mRNAs secondary structures. Key component of recessive resistance to potyviruses such as peanut stripe virus (PStV). In terms of biological role, (Microbial infection) Susceptibility host factor required for viral infection by recruiting viral RNAs to the host ribosomal complex via an interaction with viral genome-linked protein (VPg). The polypeptide is Eukaryotic translation initiation factor 4E-1 (Arachis hypogaea (Peanut)).